The chain runs to 371 residues: UDP-N-acetylglucosamine--N-acetylmuramyl-(pentapeptide) pyrophosphoryl-undecaprenol N-acetylglucosamine transferase (371 aa).

UDP-N-acetyl-alpha-D-glucosamine contacts are provided by residues 10–12 (TGG), Asn122, Arg166, Ser196, and Gln301.

This sequence belongs to the glycosyltransferase 28 family. MurG subfamily.

Its subcellular location is the cell inner membrane. The catalysed reaction is di-trans,octa-cis-undecaprenyl diphospho-N-acetyl-alpha-D-muramoyl-L-alanyl-D-glutamyl-meso-2,6-diaminopimeloyl-D-alanyl-D-alanine + UDP-N-acetyl-alpha-D-glucosamine = di-trans,octa-cis-undecaprenyl diphospho-[N-acetyl-alpha-D-glucosaminyl-(1-&gt;4)]-N-acetyl-alpha-D-muramoyl-L-alanyl-D-glutamyl-meso-2,6-diaminopimeloyl-D-alanyl-D-alanine + UDP + H(+). It participates in cell wall biogenesis; peptidoglycan biosynthesis. Functionally, cell wall formation. Catalyzes the transfer of a GlcNAc subunit on undecaprenyl-pyrophosphoryl-MurNAc-pentapeptide (lipid intermediate I) to form undecaprenyl-pyrophosphoryl-MurNAc-(pentapeptide)GlcNAc (lipid intermediate II). The polypeptide is UDP-N-acetylglucosamine--N-acetylmuramyl-(pentapeptide) pyrophosphoryl-undecaprenol N-acetylglucosamine transferase (Halothermothrix orenii (strain H 168 / OCM 544 / DSM 9562)).